The chain runs to 439 residues: Methionine aminopeptidase 2-2 (439 aa).

The segment at 1 to 90 (MAAQAPPTDE…SQLFPDKQYP (90 aa)) is disordered. Basic and acidic residues predominate over residues 10 to 23 (ELSKLSVEDADNKP). Residues 35–45 (DEDDSEDDAED) are compositionally biased toward acidic residues. The segment covering 54-68 (AKKKKKRKPRKKKKN) has biased composition (basic residues). Residue histidine 192 coordinates substrate. A divalent metal cation is bound by residues aspartate 212, aspartate 223, and histidine 292. Histidine 300 lines the substrate pocket. Glutamate 325 and glutamate 420 together coordinate a divalent metal cation.

Belongs to the peptidase M24A family. Methionine aminopeptidase eukaryotic type 2 subfamily. Co(2+) is required as a cofactor. The cofactor is Zn(2+). Requires Mn(2+) as cofactor. It depends on Fe(2+) as a cofactor.

It is found in the cytoplasm. The enzyme catalyses Release of N-terminal amino acids, preferentially methionine, from peptides and arylamides.. Its function is as follows. Cotranslationally removes the N-terminal methionine from nascent proteins. The N-terminal methionine is often cleaved when the second residue in the primary sequence is small and uncharged (Met-Ala-, Cys, Gly, Pro, Ser, Thr, or Val). The chain is Methionine aminopeptidase 2-2 from Chaetomium globosum (strain ATCC 6205 / CBS 148.51 / DSM 1962 / NBRC 6347 / NRRL 1970) (Soil fungus).